A 137-amino-acid chain; its full sequence is Large ribosomal subunit protein uL16 (137 aa).

It belongs to the universal ribosomal protein uL16 family. Part of the 50S ribosomal subunit.

Its function is as follows. Binds 23S rRNA and is also seen to make contacts with the A and possibly P site tRNAs. In Baumannia cicadellinicola subsp. Homalodisca coagulata, this protein is Large ribosomal subunit protein uL16.